We begin with the raw amino-acid sequence, 117 residues long: uncharacterized protein (117 aa).

This is an uncharacterized protein from Encephalitozoon cuniculi (strain GB-M1) (Microsporidian parasite).